The sequence spans 494 residues: Sulfate adenylyltransferase subunit 1 (494 aa).

The 215-residue stretch at 28–242 folds into the tr-type G domain; that stretch reads TRPLRLITCG…TLELATVRST (215 aa). Residues 37–44 are G1; the sequence is GSVDDGKS. 37–44 contacts GTP; it reads GSVDDGKS. The tract at residues 94 to 98 is G2; sequence GITID. The tract at residues 115–118 is G3; it reads DTPG. GTP-binding positions include 115–119 and 170–173; these read DTPGH and NKID. A G4 region spans residues 170-173; the sequence is NKID. Residues 207 to 209 form a G5 region; the sequence is SAL.

It belongs to the TRAFAC class translation factor GTPase superfamily. Classic translation factor GTPase family. CysN/NodQ subfamily. As to quaternary structure, heterodimer composed of CysD, the smaller subunit, and CysN.

It catalyses the reaction sulfate + ATP + H(+) = adenosine 5'-phosphosulfate + diphosphate. It functions in the pathway sulfur metabolism; hydrogen sulfide biosynthesis; sulfite from sulfate: step 1/3. Functionally, with CysD forms the ATP sulfurylase (ATPS) that catalyzes the adenylation of sulfate producing adenosine 5'-phosphosulfate (APS) and diphosphate, the first enzymatic step in sulfur assimilation pathway. APS synthesis involves the formation of a high-energy phosphoric-sulfuric acid anhydride bond driven by GTP hydrolysis by CysN coupled to ATP hydrolysis by CysD. This Agrobacterium fabrum (strain C58 / ATCC 33970) (Agrobacterium tumefaciens (strain C58)) protein is Sulfate adenylyltransferase subunit 1.